A 364-amino-acid chain; its full sequence is Protein spindle-F (364 aa).

Residues 1 to 26 (MEASAAKITPMASSMSASGSTNSPSS) form a disordered region. Residues 9 to 26 (TPMASSMSASGSTNSPSS) show a composition bias toward low complexity. Residues 32–114 (ALQVALQTIK…GMVSNENRRL (83 aa)) are a coiled coil. Ser-53 bears the Phosphoserine mark. The tract at residues 56-75 (EENQQLREASSRSEGAPRAN) is disordered. Ser-85, Ser-172, and Ser-202 each carry phosphoserine. The stretch at 210–243 (AKRCLDGLQELRREAMKQQQELRSVMTLLENRIA) forms a coiled coil. Phosphoserine is present on residues Ser-264 and Ser-270. Residues 310-336 (EKTCPMCGKQYSSQVSFNAFREHVEMH) form a UBZ1-type zinc finger. Positions 313 and 316 each coordinate Zn(2+). A Phosphoserine modification is found at Ser-325. 2 residues coordinate Zn(2+): His-332 and His-336. Ser-349 is subject to Phosphoserine.

As to quaternary structure, forms homooligomers. Interacts with the dynein light chain ctp. Interacts (via C-terminus) with IKKepsilon; this leads to phosphorylation of spn-F. Forms ternary complexes with ctp and IKKepsilon; this is required for spn-F redistribution from puncta in larval neurons and for dendrite pruning. Interacts with ctp and IKKepsilon through distinct regions. Interacts (via C-terminus) with jvl. Phosphorylated by IKKepsilon. Phosphorylation is required for spn-F neuronal distribution and dendrite pruning and reduces spn-F homooligomerization. It does not lead to spn-F degradation. In terms of tissue distribution, in pupal bristles, localizes to the bristle tip throughout the elongation period (at protein level).

Its subcellular location is the cytoplasm. The protein localises to the cytoskeleton. It localises to the cell projection. The protein resides in the axon. It is found in the dendrite. Its subcellular location is the perikaryon. In terms of biological role, plays a role in oocyte axis determination and microtubule organization during oogenesis. Also required for polarized organization of the bristle. Required, with jvl, for activation of the kinase IKKepsilon in the germ line. Also required for localization of IKKepsilon to the distal tip of elongating bristles by acting as an adapter linking IKKepsilon and cytoplasmic dynein. Involved in dendrite pruning in larval sensory neurons during metamorphosis. This chain is Protein spindle-F, found in Drosophila melanogaster (Fruit fly).